A 494-amino-acid chain; its full sequence is Vacuolar-processing enzyme (494 aa).

Positions 1-20 are cleaved as a signal peptide; the sequence is MTRLASGVLITLLVALAGIA. A glycan (N-linked (GlcNAc...) asparagine) is linked at Asn151. His178 is an active-site residue. Catalysis depends on Cys220, which acts as the Nucleophile. Cys253 and Cys267 are oxidised to a cystine. A glycan (N-linked (GlcNAc...) asparagine) is linked at Asn336. 2 disulfide bridges follow: Cys430–Cys460 and Cys442–Cys477.

This sequence belongs to the peptidase C13 family. In terms of tissue distribution, high levels are seen in the flowers, a lower level expression is seen in the leaves, while very low levels are seen in the stems and roots.

Functionally, asparagine-specific endopeptidase that may be involved in processing of proteins targeted to vacuoles that accumulate during ethylene-regulated processes such as flower opening and flavedo degreening. The sequence is that of Vacuolar-processing enzyme from Citrus sinensis (Sweet orange).